A 158-amino-acid polypeptide reads, in one-letter code: Protein Smg homolog (158 aa).

The protein belongs to the Smg family.

The sequence is that of Protein Smg homolog from Shewanella oneidensis (strain ATCC 700550 / JCM 31522 / CIP 106686 / LMG 19005 / NCIMB 14063 / MR-1).